The sequence spans 33 residues: Maurocalcin (33 aa).

3 disulfides stabilise this stretch: Cys3–Cys17, Cys10–Cys21, and Cys16–Cys32. Residues 22–24 (KRR) are essential for stimulation of [3H]ryanodine binding to RYR.

The protein belongs to the scorpion calcin family. In terms of processing, the non-natural D-maurocalcin (a chiral analog of maurocalcin composed of D-amino acids) completely loses the ability to stimulate [3H]ryanodine binding and calcium release. Its protease resistance, combined with its efficient cell penetration at concentrations devoid of cell toxicity, suggests that it should be an excellent vector for in vivo applications. As to expression, expressed by the venom gland.

The protein resides in the secreted. Its function is as follows. This toxin stabilizes ryanodine receptor 1 (RyR1) opening in a long-lasting subconductance state (48%-60% of the full conductance state). Furthermore, it triggers calcium release from sarcoplasmic vesicles (6.6 nM are enough to induce a sharp release, and 60% of the total calcium is released after toxin (100 nM) addition) probably by acting as a cell-penetrating peptide (CPP). In addition, it has been shown to dose-dependently stimulate ryanodine binding to RyR1 (EC(50)=12.5-26.4 nM). It also augments the bell-shaped calcium-[3H]ryanodine binding curve that is maximal at about 10 uM calcium concentration. It binds a different site as ryanodine. It acts synergistically with caffeine. In vivo, intracerebroventricular injection into mice causes death. In Scorpio palmatus (Israeli golden scorpion), this protein is Maurocalcin.